The sequence spans 1150 residues: Protogenin (1150 aa).

Residues 1 to 35 (MAPPLRPLARLRPPGMLLRALLLLLLLSPLPGVWC) form the signal peptide. Ig-like domains follow at residues 36 to 130 (FSEL…AHLA), 135 to 222 (SAFE…ASLT), 235 to 322 (PTII…ATLT), and 327 to 411 (PSFV…ARLT). The Extracellular segment spans residues 36–949 (FSELSFVKEP…YYHLDQKSMT (914 aa)). Intrachain disulfides connect cysteine 60–cysteine 113, cysteine 156–cysteine 205, cysteine 256–cysteine 304, and cysteine 348–cysteine 395. A glycan (N-linked (GlcNAc...) asparagine) is linked at asparagine 90. 5 consecutive Fibronectin type-III domains span residues 421–515 (APYN…TLED), 517–613 (PLRP…TPKA), 618–717 (APKS…VRDR), 724–817 (PPHH…TLPE), and 822–917 (PPVG…VLPK). Residue asparagine 488 is glycosylated (N-linked (GlcNAc...) asparagine). N-linked (GlcNAc...) asparagine glycosylation occurs at asparagine 630. The chain crosses the membrane as a helical span at residues 950 to 970 (GIAVGVGIALTCILICVLILI). Residues 971-1150 (YRSKARKSSA…SVISTTPPNL (180 aa)) are Cytoplasmic-facing. Disordered stretches follow at residues 981-1002 (SKTAQNGTQQLPRTSASLASGN) and 1086-1150 (ISDE…PPNL). 2 stretches are compositionally biased toward polar residues: residues 983 to 1000 (TAQNGTQQLPRTSASLAS) and 1092 to 1102 (PSSPGQTTSFS). The segment covering 1110–1138 (DTEHSANSEGSHETGDSGRFSHESNDEIH) has biased composition (basic and acidic residues). The segment covering 1141-1150 (SVISTTPPNL) has biased composition (polar residues).

The protein belongs to the immunoglobulin superfamily. DCC family.

The protein resides in the membrane. Functionally, may play a role in anteroposterior axis elongation. In Homo sapiens (Human), this protein is Protogenin.